Here is a 584-residue protein sequence, read N- to C-terminus: WD repeat-containing protein JIP5 (584 aa).

4 WD repeats span residues 128-173 (RHKG…GKVD), 180-219 (SAKD…GTNK), 269-314 (DQED…LADQ), and 378-415 (DAVD…DQEE). 2 disordered regions span residues 409 to 497 (YSDD…SEYI) and 516 to 563 (KKLI…EKKV). Composition is skewed to acidic residues over residues 412–429 (DQEE…EEDS) and 450–460 (FDSENNDDGEE). 2 stretches are compositionally biased toward basic and acidic residues: residues 483–493 (TRNEENKDNTK) and 528–552 (SKKE…EVPQ).

It belongs to the WD repeat WDR55 family.

The protein resides in the nucleus. Its subcellular location is the nucleolus. The polypeptide is WD repeat-containing protein JIP5 (JIP5) (Lodderomyces elongisporus (strain ATCC 11503 / CBS 2605 / JCM 1781 / NBRC 1676 / NRRL YB-4239) (Yeast)).